A 741-amino-acid polypeptide reads, in one-letter code: Prestin (741 aa).

Topologically, residues 1-79 are cytoplasmic; sequence MDHVEETEIL…WLPAYRFKEY (79 aa). A helical transmembrane segment spans residues 80 to 105; sequence VLGDIVSGISTGVLQLPQGLAFAMLA. Residues 106–109 are Extracellular-facing; sequence AVPP. Residues 110–125 form a helical membrane-spanning segment; sequence VFGLYSSFYPVIMYCF. Topologically, residues 126–137 are cytoplasmic; sequence FGTSRHISIGPF. Residues 138 to 147 traverse the membrane as a helical segment; it reads AVISLMIGGV. The Extracellular portion of the chain corresponds to 148-178; sequence AVRLVPDDIVIPGGVNATNSTEARDALRVKV. Residues 158–168 carry the Involved in motor function motif; sequence IPGGVNATNST. 2 N-linked (GlcNAc...) asparagine glycosylation sites follow: Asn-163 and Asn-166. 2 helical membrane-spanning segments follow: residues 179–208 and 209–230; these read AMSV…LTEP and LVRG…KYLF. At 231–243 the chain is on the extracellular side; it reads GVKTKRYSGIFSV. Residues 244–248 constitute an intramembrane region (helical); that stretch reads VYSTV. Over 249 to 261 the chain is Extracellular; that stretch reads AVLQNVKNLNVCS. A helical transmembrane segment spans residues 262 to 283; it reads LGVGLMVFGLLLGGKEFNERFK. Residues 284 to 291 are Cytoplasmic-facing; sequence EKLPAPIP. The helical transmembrane segment at 292 to 303 threads the bilayer; sequence LEFFAVVMGTGI. At 304 to 338 the chain is on the extracellular side; that stretch reads SAGFSLHESYNVDVVGTLPLGLLPPANPDTSLFHL. The helical transmembrane segment at 339–361 threads the bilayer; sequence VYVDAIAIAIVGFSVTISMAKTL. Topologically, residues 362–370 are cytoplasmic; it reads ANKHGYQVD. The chain crosses the membrane as a helical span at residues 371–388; that stretch reads GNQELIALGLCNSTGSLF. At 389 to 396 the chain is on the extracellular side; it reads QTFAISCS. Residues 397 to 406 traverse the membrane as a helical segment; the sequence is LSRSLVQEGT. Ser-398 is a binding site for salicylate. At 407–410 the chain is on the cytoplasmic side; that stretch reads GGKT. A helical transmembrane segment spans residues 411–429; sequence QLAGCLASLMILLVILATG. Topologically, residues 430–436 are extracellular; sequence FLFESLP. Residues 437–459 form a helical membrane-spanning segment; it reads QAVLSAIVIVNLKGMFMQFSDLP. Residues 460-467 lie on the Cytoplasmic side of the membrane; the sequence is FFWRTSKI. A helical transmembrane segment spans residues 468–483; that stretch reads ELTIWLTTFVSSLFLG. Leu-484 is a topological domain (extracellular). The chain crosses the membrane as a helical span at residues 485–498; the sequence is DYGLITAVIIALMT. At 499–741 the chain is on the cytoplasmic side; the sequence is VIYRTQSPSY…DSEPNATPEA (243 aa). Positions 505–718 are extended region for STAS domain; it reads SPSYIVLGQL…AVLGSQVREA (214 aa). The STAS domain maps to 525-713; sequence AYEEVKEVPG…HSIHDAVLGS (189 aa). A disordered region spans residues 718-741; it reads ALAEQEATAAPPQEDSEPNATPEA. Residues 721–730 show a composition bias toward low complexity; the sequence is EQEATAAPPQ.

Belongs to the SLC26A/SulP transporter (TC 2.A.53) family. In terms of assembly, homodimer. Interacts (via STAS domain) with CALM; this interaction is calcium-dependent and the STAS domain interacts with only one lobe of CALM which is an elongated conformation.

The protein resides in the cell membrane. It catalyses the reaction 2 hydrogencarbonate(in) + chloride(out) = 2 hydrogencarbonate(out) + chloride(in). In terms of biological role, voltage-sensitive motor protein that drives outer hair cell (OHC) electromotility (eM) and participates in sound amplification in the hearing organ. Converts changes in the transmembrane electric potential into mechanical displacements resulting in the coupling of its expansion to movement of a charged voltage sensor across the lipid membrane. The nature of the voltage sensor is not completely clear, and two models compete. In the first model, acts as an incomplete transporter where intracellular chloride anion acts as extrinsic voltage sensor that drives conformational change in the protein which is sufficient to produce a length change in the plane of the membrane and hence in the length of the OHC. The second model in which multiple charged amino acid residues are distributed at the intracellular and extracellular membrane interfaces that form an intrinsic voltage sensor, whose movement produces the non-linear capacitance (NLC). However, the effective voltage sensor may be the result of a hybrid voltage sensor assembled from intrinsic charge (charged residues) and extrinsic charge (bound anion). Notably, binding of anions to the anion-binding pocket partially neutralizes the intrinsic positive charge rather than to form an electrically negative sensor, therefore remaining charge may serve as voltage sensor that, after depolarization, moves from down (expanded state) to up (contracted) conformation, which is accompanied by an eccentric contraction of the intermembrane cross-sectional area of the protein as well as a major increase in the hydrophobic thickness of the protein having as consequences the plasma membrane thickening and the cell contraction after membrane depolarization. The anion-binding pocket transits from the inward-open (Down) state, where it is exposed toward the intracellular solvent in the absence of anion, to the occluded (Up) state upon anion binding. Salicylate competes for the anion-binding site and inhibits the voltage-sensor movement, and therefore inhibits the charge transfer and electromotility by displacing Cl(-) from the anion-binding site and by preventing the structural transitions to the contracted state. In addition, can act as a weak Cl(-)/HCO3 (-) antiporter across the cell membrane and so regulate the intracellular pH of the outer hair cells (OHCs), while firstly found as being unable to mediate electrogenic anion transport. Moreover, supports a role in cardiac mechanical amplification serving as an elastic element to enhance the actomyosin- based sarcomere contraction system. In Tursiops truncatus (Atlantic bottle-nosed dolphin), this protein is Prestin.